We begin with the raw amino-acid sequence, 254 residues long: 3-deoxy-manno-octulosonate cytidylyltransferase (254 aa).

Belongs to the KdsB family.

It localises to the cytoplasm. It catalyses the reaction 3-deoxy-alpha-D-manno-oct-2-ulosonate + CTP = CMP-3-deoxy-beta-D-manno-octulosonate + diphosphate. It participates in nucleotide-sugar biosynthesis; CMP-3-deoxy-D-manno-octulosonate biosynthesis; CMP-3-deoxy-D-manno-octulosonate from 3-deoxy-D-manno-octulosonate and CTP: step 1/1. It functions in the pathway bacterial outer membrane biogenesis; lipopolysaccharide biosynthesis. In terms of biological role, activates KDO (a required 8-carbon sugar) for incorporation into bacterial lipopolysaccharide in Gram-negative bacteria. In Pseudomonas entomophila (strain L48), this protein is 3-deoxy-manno-octulosonate cytidylyltransferase.